A 356-amino-acid chain; its full sequence is Phospho-N-acetylmuramoyl-pentapeptide-transferase (356 aa).

Helical transmembrane passes span 25 to 45 (TVAA…SIIS), 70 to 90 (GTPT…ALLW), 93 to 113 (LFNI…AIGF), 138 to 158 (FLVA…GLAL), 164 to 184 (YFIN…VGLG), 195 to 215 (GLAI…AYLS), 232 to 252 (VGEL…FLWF), 258 to 278 (AIFM…IVSV), 284 to 304 (IVLI…IIQV), and 333 to 353 (QIVV…LSTL).

It belongs to the glycosyltransferase 4 family. MraY subfamily. The cofactor is Mg(2+).

Its subcellular location is the cell inner membrane. It catalyses the reaction UDP-N-acetyl-alpha-D-muramoyl-L-alanyl-gamma-D-glutamyl-meso-2,6-diaminopimeloyl-D-alanyl-D-alanine + di-trans,octa-cis-undecaprenyl phosphate = di-trans,octa-cis-undecaprenyl diphospho-N-acetyl-alpha-D-muramoyl-L-alanyl-D-glutamyl-meso-2,6-diaminopimeloyl-D-alanyl-D-alanine + UMP. Its pathway is cell wall biogenesis; peptidoglycan biosynthesis. Functionally, catalyzes the initial step of the lipid cycle reactions in the biosynthesis of the cell wall peptidoglycan: transfers peptidoglycan precursor phospho-MurNAc-pentapeptide from UDP-MurNAc-pentapeptide onto the lipid carrier undecaprenyl phosphate, yielding undecaprenyl-pyrophosphoryl-MurNAc-pentapeptide, known as lipid I. This Bartonella bacilliformis (strain ATCC 35685 / KC583 / Herrer 020/F12,63) protein is Phospho-N-acetylmuramoyl-pentapeptide-transferase.